The chain runs to 332 residues: Putative pumilio homolog 17 (332 aa).

One can recognise a PUM-HD domain in the interval 1–302 (MTNINRLSMS…ILTADLFYSL (302 aa)). One copy of the Pumilio 1 repeat lies at 82-117 (SDSDYFMVITRNKNGSKSLQKLMRMSDDMDVFFFVA). A Pumilio 2; degenerate repeat occupies 118–152 (IMRLFIHVMIDKYASYVAIQGMRIFKQDKRELMYD). 4 Pumilio repeats span residues 153-188 (HILR…DELM), 189-225 (DIVS…NIAD), 226-264 (KLCG…DLLA), and 265-300 (CKTE…DLFY).

It is found in the cytoplasm. Its function is as follows. Sequence-specific RNA-binding protein that regulates translation and mRNA stability by binding the 3'-UTR of target mRNAs. The chain is Putative pumilio homolog 17 (APUM17) from Arabidopsis thaliana (Mouse-ear cress).